Here is a 434-residue protein sequence, read N- to C-terminus: Serine--tRNA ligase (434 aa).

237–239 serves as a coordination point for L-serine; it reads TAE. Position 268-270 (268-270) interacts with ATP; that stretch reads RAE. E291 is an L-serine binding site. Position 358-361 (358-361) interacts with ATP; the sequence is EISS. L-serine is bound at residue S393.

Belongs to the class-II aminoacyl-tRNA synthetase family. Type-1 seryl-tRNA synthetase subfamily. In terms of assembly, homodimer. The tRNA molecule binds across the dimer.

It localises to the cytoplasm. The enzyme catalyses tRNA(Ser) + L-serine + ATP = L-seryl-tRNA(Ser) + AMP + diphosphate + H(+). It catalyses the reaction tRNA(Sec) + L-serine + ATP = L-seryl-tRNA(Sec) + AMP + diphosphate + H(+). The protein operates within aminoacyl-tRNA biosynthesis; selenocysteinyl-tRNA(Sec) biosynthesis; L-seryl-tRNA(Sec) from L-serine and tRNA(Sec): step 1/1. In terms of biological role, catalyzes the attachment of serine to tRNA(Ser). Is also able to aminoacylate tRNA(Sec) with serine, to form the misacylated tRNA L-seryl-tRNA(Sec), which will be further converted into selenocysteinyl-tRNA(Sec). The protein is Serine--tRNA ligase of Rhodopseudomonas palustris (strain ATCC BAA-98 / CGA009).